Reading from the N-terminus, the 456-residue chain is 3-isopropylmalate dehydratase large subunit (456 aa).

[4Fe-4S] cluster is bound by residues Cys336, Cys396, and Cys399.

This sequence belongs to the aconitase/IPM isomerase family. LeuC type 1 subfamily. As to quaternary structure, heterodimer of LeuC and LeuD. Requires [4Fe-4S] cluster as cofactor.

The enzyme catalyses (2R,3S)-3-isopropylmalate = (2S)-2-isopropylmalate. It participates in amino-acid biosynthesis; L-leucine biosynthesis; L-leucine from 3-methyl-2-oxobutanoate: step 2/4. In terms of biological role, catalyzes the isomerization between 2-isopropylmalate and 3-isopropylmalate, via the formation of 2-isopropylmaleate. The protein is 3-isopropylmalate dehydratase large subunit of Staphylococcus saprophyticus subsp. saprophyticus (strain ATCC 15305 / DSM 20229 / NCIMB 8711 / NCTC 7292 / S-41).